The sequence spans 333 residues: B3 domain-containing protein At1g32030 (333 aa).

Composition is skewed to polar residues over residues 76-99 and 134-143; these read VTVR…SLLD and PQNASSSSTL. Positions 76-179 are disordered; sequence VTVRNPEQNQ…SEPKKAKTPY (104 aa). Positions 220–328 form a DNA-binding region, TF-B3; it reads QSRLLMPFNT…ILSFALVLPP (109 aa).

The protein localises to the nucleus. The protein is B3 domain-containing protein At1g32030 of Arabidopsis thaliana (Mouse-ear cress).